Reading from the N-terminus, the 339-residue chain is Phenylalanine--tRNA ligase alpha subunit (339 aa).

Glutamate 253 lines the Mg(2+) pocket.

It belongs to the class-II aminoacyl-tRNA synthetase family. Phe-tRNA synthetase alpha subunit type 1 subfamily. In terms of assembly, tetramer of two alpha and two beta subunits. It depends on Mg(2+) as a cofactor.

It localises to the cytoplasm. The catalysed reaction is tRNA(Phe) + L-phenylalanine + ATP = L-phenylalanyl-tRNA(Phe) + AMP + diphosphate + H(+). The sequence is that of Phenylalanine--tRNA ligase alpha subunit from Alcanivorax borkumensis (strain ATCC 700651 / DSM 11573 / NCIMB 13689 / SK2).